We begin with the raw amino-acid sequence, 240 residues long: Sorting nexin-3 (240 aa).

The segment at 1–85 is disordered; it reads MSAYPQDTYF…PPVQVTHSPF (85 aa). Residues 22 to 33 show a composition bias toward pro residues; the sequence is YQPPPQPQPQQP. Low complexity-rich tracts occupy residues 34–54 and 62–84; these read PYQQQPYQQQAYQYNAQQPYQ and QQSPPQSSTVPPQSPPVQVTHSP. The region spanning 118 to 235 is the PX domain; it reads SFLEIEIRNP…CAFLQDPAWD (118 aa). The a 1,2-diacyl-sn-glycero-3-phospho-(1D-myo-inositol-3-phosphate) site is built by Arg161, Ser163, Lys187, Arg192, and Arg201.

The protein belongs to the sorting nexin family.

Its subcellular location is the cytoplasm. It localises to the golgi apparatus membrane. The protein resides in the prevacuolar compartment membrane. Its function is as follows. Required for retention of late Golgi membrane proteins. Component of the retrieval machinery that functions by direct interaction with the cytosolic tails of certain TGN membrane proteins during the sorting/budding process at the prevacuolar compartment. Binds phosphatidylinositol 3-phosphate (PtdIns(P3)). In Cryptococcus neoformans var. neoformans serotype D (strain JEC21 / ATCC MYA-565) (Filobasidiella neoformans), this protein is Sorting nexin-3 (SNX3).